A 241-amino-acid chain; its full sequence is Carboxy-S-adenosyl-L-methionine synthase (241 aa).

S-adenosyl-L-methionine contacts are provided by residues tyrosine 38, 63–65 (GCS), 88–89 (DN), 116–117 (DI), asparagine 131, and arginine 198.

The protein belongs to the class I-like SAM-binding methyltransferase superfamily. Cx-SAM synthase family. Homodimer.

It carries out the reaction prephenate + S-adenosyl-L-methionine = carboxy-S-adenosyl-L-methionine + 3-phenylpyruvate + H2O. Catalyzes the conversion of S-adenosyl-L-methionine (SAM) to carboxy-S-adenosyl-L-methionine (Cx-SAM). The chain is Carboxy-S-adenosyl-L-methionine synthase from Actinobacillus pleuropneumoniae serotype 5b (strain L20).